Reading from the N-terminus, the 398-residue chain is Galactose-3-O-sulfotransferase 2 (398 aa).

The Cytoplasmic portion of the chain corresponds to 1–10; the sequence is MMSMLGGLQR. The chain crosses the membrane as a helical; Signal-anchor for type II membrane protein span at residues 11–31; sequence YFRVILLLLLALTLLLLAGFL. The Lumenal portion of the chain corresponds to 32-398; sequence HSDLELDTPL…PLKNIPFLGA (367 aa). N-linked (GlcNAc...) asparagine glycosylation is found at Asn79, Asn132, Asn179, Asn287, Asn330, and Asn360.

It belongs to the galactose-3-O-sulfotransferase family. As to expression, ubiquitous. Detected in heart, stomach, colon, liver and spleen, in epithelial cells lining the lower to middle layer of the crypts in colonic mucosa, hepatocytes surrounding the central vein of the liver, extravillous cytotrophoblasts in the basal plate of the septum of the placenta, renal tubules of the kidney, and neuronal cells of the cerebral cortex.

Its subcellular location is the golgi apparatus. It is found in the golgi stack membrane. The protein operates within protein modification; carbohydrate sulfation. Strongly inhibited by Cu(2+) and Zn(2+). Functionally, transfers a sulfate group to the hydroxyl group at C3 of non-reducing beta-galactosyl residues. Acts both on type 1 (Gal-beta-1,3-GlcNAc) and type 2 (Gal-beta-1,4-GlcNAc) chains with similar efficiency. The protein is Galactose-3-O-sulfotransferase 2 (GAL3ST2) of Homo sapiens (Human).